Consider the following 474-residue polypeptide: Equilibrative nucleoside transporter 3 (474 aa).

The Cytoplasmic segment spans residues 1 to 53 (MAIISEDDFRHTSNSTYRTASSSLRADQEALLEKLLDRPPPSLQRPEDRFNGT). Phosphoserine is present on residues S21 and S23. The Dileucine internalization motif signature appears at 31 to 32 (LL). Residues 54 to 74 (YIIFFSLGIGGLLPWNFFVTA) form a helical membrane-spanning segment. Residues 75-105 (QEYWIFKLSNCSSPAAGEEPKDSDILNYFES) lie on the Extracellular side of the membrane. The N-linked (GlcNAc...) asparagine glycan is linked to N84. Residues 106 to 126 (YLAVASTVPSVLCLALNFLLV) traverse the membrane as a helical segment. The Cytoplasmic portion of the chain corresponds to 127 to 134 (NRVPIRVR). The chain crosses the membrane as a helical span at residues 135–155 (VLASLTVMLAIFIVMTVLVKV). At 156–161 (DTSSWT) the chain is on the extracellular side. The helical transmembrane segment at 162–182 (HSFFTITITCMAILSGTSTIF) threads the bilayer. Over 183–201 (NSSVFGMTGSFPMRNSQAL) the chain is Cytoplasmic. A helical transmembrane segment spans residues 202-222 (ISGGAMGGTLSAVASLVDLAV). Topologically, residues 223–230 (ASDVTDST) are extracellular. A helical membrane pass occupies residues 231–251 (LAFFLTADIFLALCIGLYLLL). Residues 252–305 (PRLDYARYYMKPVWPTVFSGEEQLPQDSPSPTSVAPGSSDPQTPPLGPILKKTT) lie on the Cytoplasmic side of the membrane. The interval 272-294 (EEQLPQDSPSPTSVAPGSSDPQT) is disordered. The segment covering 276–292 (PQDSPSPTSVAPGSSDP) has biased composition (polar residues). A helical transmembrane segment spans residues 306–326 (GLGFCIIYLFFITSLIFPAIC). Topologically, residues 327–339 (TNIESLSKGSGSP) are extracellular. Residues 340 to 357 (WSTKFFVPLTTFLLYNFA) traverse the membrane as a helical segment. Topologically, residues 358 to 376 (DLCGRQVTAWIQVPGPRSK) are cytoplasmic. Residues 377-397 (ALPGLALLRTCFVPLFVFCNY) form a helical membrane-spanning segment. Over 398–414 (QPRGHLHTVLFQSDVYP) the chain is Extracellular. The chain crosses the membrane as a helical span at residues 415 to 435 (VLFTSLLGLSNGYLSTLALIY). Residues 436–453 (GPKIVPRELAEATGVVMT) are Cytoplasmic-facing. Residues 454–474 (FYMGLGLVLGSACSALLVHLI) traverse the membrane as a helical segment.

This sequence belongs to the SLC29A/ENT transporter (TC 2.A.57) family.

The protein localises to the lysosome membrane. It localises to the late endosome membrane. Its subcellular location is the mitochondrion membrane. The protein resides in the cell membrane. The enzyme catalyses adenosine(in) = adenosine(out). It carries out the reaction guanosine(in) = guanosine(out). It catalyses the reaction inosine(in) = inosine(out). The catalysed reaction is uridine(out) = uridine(in). The enzyme catalyses cytidine(in) = cytidine(out). It carries out the reaction thymidine(in) = thymidine(out). It catalyses the reaction 2'-deoxyadenosine(in) = 2'-deoxyadenosine(out). The catalysed reaction is 2'-deoxycytidine(in) = 2'-deoxycytidine(out). The enzyme catalyses guanine(out) = guanine(in). It carries out the reaction uracil(in) = uracil(out). It catalyses the reaction (R)-noradrenaline(out) = (R)-noradrenaline(in). The catalysed reaction is dopamine(out) = dopamine(in). The enzyme catalyses serotonin(out) = serotonin(in). It carries out the reaction tyramine(in) = tyramine(out). It catalyses the reaction ATP(in) = ATP(out). In terms of biological role, uniporter that mediates the facilitative transport of nucleoside across lysosomal and mitochondrial membranes. Functions as a non-electrogenic Na(+)-independent transporter. Substrate transport is pH-dependent and enhanced under acidic condition, probably reflecting the location of the transporter in acidic intracellular compartments. Proton is not a cotransporting ion but most likely change the ionization state of the transporter which dictates transport-permissible/impermissible conformation for nucleoside translocation. May direct the nucleoside transport from lysosomes to cytosol or cytosol to mitochondria to facilitate the fundamental function of salvage synthesis of nucleic acids. Involved in the transport of nucleosides (adenosine, guanosine, uridine, thymidine, cytidine and inosine) and deoxynucleosides (deoxyadenosine, deoxycytidine). Also mediates transport of purine nucleobases (adenine, guanine) and pyrimidine nucleobases (uracil). Also able to transport monoamine neurotransmitters dopamine, serotonin, noradrenaline and tyramine. Capable of transporting ATP. Mediates nucleoside export from lysosomes in macrophages, which regulates macrophage functions and numbers. This is Equilibrative nucleoside transporter 3 (SLC29A3) from Bos taurus (Bovine).